The chain runs to 220 residues: MDSASQDINLNSPNKGVLSDFMTDVPVDPGVVHRTPVVEGLTEGEEEELRAELAKVEEEIVTLRQVLAAKERHCGELKRRLGLSTLGELKQNLSRSWHDVQVSTAYVKTSEKLGEWNEKVTQSDLYKKTQETLSQAGQKTSAALSTMGSAISRKLGDMSSYSIRHSISMPVMRNSATFKSFEDRVGTIKSKVVGGRENGSDNLPPSPGSGDQTLPDHAPF.

Position 1 is an N-acetylmethionine (Met1). Phosphoserine occurs at positions 3, 12, and 19. Residues 40–82 (GLTEGEEEELRAELAKVEEEIVTLRQVLAAKERHCGELKRRLG) are a coiled coil. Residues Ser96, Ser149, Ser168, and Ser175 each carry the phosphoserine modification. A Phosphothreonine modification is found at Thr177. Residue Ser180 is modified to Phosphoserine. Residue Thr187 is modified to Phosphothreonine. Positions 189 to 220 (KSKVVGGRENGSDNLPPSPGSGDQTLPDHAPF) are disordered. Ser206 and Ser209 each carry phosphoserine.

This sequence belongs to the TPD52 family. In terms of assembly, forms a homodimer or heterodimer with other members of the family. Interacts with MAL2.

The sequence is that of Tumor protein D54 (Tpd52l2) from Mus musculus (Mouse).